Consider the following 369-residue polypeptide: Flagellar P-ring protein (369 aa).

The first 23 residues, Met-1 to Ala-23, serve as a signal peptide directing secretion.

Belongs to the FlgI family. In terms of assembly, the basal body constitutes a major portion of the flagellar organelle and consists of four rings (L,P,S, and M) mounted on a central rod.

It localises to the periplasm. The protein localises to the bacterial flagellum basal body. Functionally, assembles around the rod to form the L-ring and probably protects the motor/basal body from shearing forces during rotation. The chain is Flagellar P-ring protein from Chromohalobacter salexigens (strain ATCC BAA-138 / DSM 3043 / CIP 106854 / NCIMB 13768 / 1H11).